The chain runs to 300 residues: Acetyl-coenzyme A carboxylase carboxyl transferase subunit beta 1 (300 aa).

Residues 26-294 (MWVKCPSCGD…HTSAAQHVPA (269 aa)) enclose the CoA carboxyltransferase N-terminal domain. Residues C30, C33, C49, and C51 each contribute to the Zn(2+) site. The C4-type zinc finger occupies 30–51 (CPSCGDLIYTRQFSDNLKVCKC).

The protein belongs to the AccD/PCCB family. Acetyl-CoA carboxylase is a heterohexamer composed of biotin carboxyl carrier protein (AccB), biotin carboxylase (AccC) and two subunits each of ACCase subunit alpha (AccA) and ACCase subunit beta (AccD). Requires Zn(2+) as cofactor.

It localises to the cytoplasm. It catalyses the reaction N(6)-carboxybiotinyl-L-lysyl-[protein] + acetyl-CoA = N(6)-biotinyl-L-lysyl-[protein] + malonyl-CoA. The protein operates within lipid metabolism; malonyl-CoA biosynthesis; malonyl-CoA from acetyl-CoA: step 1/1. Functionally, component of the acetyl coenzyme A carboxylase (ACC) complex. Biotin carboxylase (BC) catalyzes the carboxylation of biotin on its carrier protein (BCCP) and then the CO(2) group is transferred by the transcarboxylase to acetyl-CoA to form malonyl-CoA. The sequence is that of Acetyl-coenzyme A carboxylase carboxyl transferase subunit beta 1 from Roseiflexus sp. (strain RS-1).